An 870-amino-acid polypeptide reads, in one-letter code: Translation initiation factor IF-2 (870 aa).

The tract at residues 49–284 is disordered; sequence SFQNSAPAEK…TKRKERPLPE (236 aa). Basic and acidic residues-rich tracts occupy residues 70 to 81 and 94 to 109; these read RKNEKKQEDNAG and QNND…RDHS. The segment covering 116–127 has biased composition (low complexity); the sequence is KPKAAALLQQFK. Basic and acidic residues-rich tracts occupy residues 144-159 and 168-183; these read AKKE…KKEQ and NKES…EKKV. Basic residues predominate over residues 254–279; that stretch reads RKRRKNKNKKRKQEQKPKKQITKRKE. The tr-type G domain maps to 371 to 540; the sequence is KRPPVVTIMG…LLQADMMELK (170 aa). The interval 380 to 387 is G1; it reads GHVDHGKT. 380 to 387 is a binding site for GTP; sequence GHVDHGKT. The tract at residues 405–409 is G2; it reads GITQK. A G3 region spans residues 426–429; that stretch reads DTPG. Residues 426-430 and 480-483 each bind GTP; these read DTPGH and NKMD. Residues 480 to 483 are G4; it reads NKMD. Residues 516–518 form a G5 region; sequence SAR.

The protein belongs to the TRAFAC class translation factor GTPase superfamily. Classic translation factor GTPase family. IF-2 subfamily.

The protein resides in the cytoplasm. Functionally, one of the essential components for the initiation of protein synthesis. Protects formylmethionyl-tRNA from spontaneous hydrolysis and promotes its binding to the 30S ribosomal subunits. Also involved in the hydrolysis of GTP during the formation of the 70S ribosomal complex. The protein is Translation initiation factor IF-2 of Lactobacillus helveticus (strain DPC 4571).